The sequence spans 161 residues: Beta-lactoglobulin-2 (161 aa).

Intrachain disulfides connect Cys-66–Cys-159 and Cys-106–Cys-119.

This sequence belongs to the calycin superfamily. Lipocalin family. In terms of assembly, monomer. As to expression, synthesized in mammary gland and secreted in milk.

It localises to the secreted. Primary component of whey, it binds retinol and is probably involved in the transport of that molecule. The chain is Beta-lactoglobulin-2 (LGB2) from Canis lupus familiaris (Dog).